A 337-amino-acid polypeptide reads, in one-letter code: Glyceraldehyde-3-phosphate dehydrogenase 1 (337 aa).

Residues 12–13 (RI), D34, and M79 contribute to the NAD(+) site. Residues 151–153 (SCT), T182, 211–212 (TG), and R234 each bind D-glyceraldehyde 3-phosphate. Residue C152 is the Nucleophile of the active site. Position 316 (N316) interacts with NAD(+).

This sequence belongs to the glyceraldehyde-3-phosphate dehydrogenase family. In terms of assembly, homotetramer.

The protein resides in the cytoplasm. The catalysed reaction is D-glyceraldehyde 3-phosphate + phosphate + NAD(+) = (2R)-3-phospho-glyceroyl phosphate + NADH + H(+). It participates in carbohydrate degradation; glycolysis; pyruvate from D-glyceraldehyde 3-phosphate: step 1/5. The protein is Glyceraldehyde-3-phosphate dehydrogenase 1 (GAP1) of Giardia intestinalis (Giardia lamblia).